The chain runs to 137 residues: Maltose regulon regulatory protein MalI (137 aa).

The HTH lacI-type domain maps to 6–60 (VTITEVAKHAGVSVTTVSMVLGNKGRISPDTIEKVNASVEALGYIRNRAAANLRS). A DNA-binding region (H-T-H motif) is located at residues 8 to 27 (ITEVAKHAGVSVTTVSMVLG).

Repressor for the malX and malY genes. The polypeptide is Maltose regulon regulatory protein MalI (malI) (Vibrio furnissii).